Here is a 391-residue protein sequence, read N- to C-terminus: Homoserine O-acetyltransferase (391 aa).

The 311-residue stretch at 50-360 (NAILICHALT…DKGHDAFLLD (311 aa)) folds into the AB hydrolase-1 domain. Catalysis depends on S155, which acts as the Nucleophile. R225 serves as a coordination point for substrate. Residues D321 and H354 contribute to the active site. A substrate-binding site is contributed by D355.

The protein belongs to the AB hydrolase superfamily. MetX family. Homodimer.

The protein resides in the cytoplasm. It catalyses the reaction L-homoserine + acetyl-CoA = O-acetyl-L-homoserine + CoA. It participates in amino-acid biosynthesis; L-methionine biosynthesis via de novo pathway; O-acetyl-L-homoserine from L-homoserine: step 1/1. Transfers an acetyl group from acetyl-CoA to L-homoserine, forming acetyl-L-homoserine. This is Homoserine O-acetyltransferase from Rhodospirillum rubrum (strain ATCC 11170 / ATH 1.1.1 / DSM 467 / LMG 4362 / NCIMB 8255 / S1).